The following is a 142-amino-acid chain: Hemoglobin subunit alpha-A (142 aa).

The region spanning V2–R142 is the Globin domain. Residue H59 participates in O2 binding. H88 lines the heme b pocket.

It belongs to the globin family. In terms of assembly, heterotetramer of two alpha chains and two beta chains. In terms of tissue distribution, red blood cells.

In terms of biological role, involved in oxygen transport from the lung to the various peripheral tissues. The protein is Hemoglobin subunit alpha-A (HBAA) of Anseranas semipalmata (Magpie goose).